A 444-amino-acid chain; its full sequence is Transcriptional regulatory protein GlrR (444 aa).

Positions 7–121 (HLLLVDDDPG…ALYQAIDDAL (115 aa)) constitute a Response regulatory domain. Position 56 is a 4-aspartylphosphate (Asp-56). Residues 136–366 (IVTRSPLMLR…VNVIEQCVAL (231 aa)) form the Sigma-54 factor interaction domain. Residues 164–171 (GQSGTGKE) and 227–236 (AEGGTLFLDE) each bind ATP. Positions 414 to 433 (VTHAARMAGRNRTEFYKLLS) form a DNA-binding region, H-T-H motif.

In terms of processing, phosphorylated by GlrK.

The protein localises to the cytoplasm. Functionally, member of the two-component regulatory system GlrR/GlrK that up-regulates transcription of the glmY sRNA when cells enter the stationary growth phase. Regulates glmY transcription by binding to three conserved sites in the purL-glmY intergenic region. This chain is Transcriptional regulatory protein GlrR (glrR), found in Escherichia coli (strain K12).